The primary structure comprises 178 residues: Large ribosomal subunit protein uL6 (178 aa).

The protein belongs to the universal ribosomal protein uL6 family. As to quaternary structure, part of the 50S ribosomal subunit.

In terms of biological role, this protein binds to the 23S rRNA, and is important in its secondary structure. It is located near the subunit interface in the base of the L7/L12 stalk, and near the tRNA binding site of the peptidyltransferase center. The polypeptide is Large ribosomal subunit protein uL6 (Kocuria rhizophila (strain ATCC 9341 / DSM 348 / NBRC 103217 / DC2201)).